A 742-amino-acid polypeptide reads, in one-letter code: Mechanosensitive ion channel protein 9 (742 aa).

Residues 1 to 117 (MAERRVSNGE…REENGGRSLR (117 aa)) are disordered. Basic and acidic residues predominate over residues 17-26 (SDKEDSKDPR). Residues Ser28 and Ser36 each carry the phosphoserine modification. The span at 105–117 (DSTREENGGRSLR) shows a compositional bias: basic and acidic residues. A phosphoserine mark is found at Ser142 and Ser145. Helical transmembrane passes span 180–200 (AFLE…SLTI), 221–241 (MVTL…VFII), 261–281 (NVQV…LFDG), 292–312 (FLDF…LFLV), 524–544 (LITG…LDIA), and 559–579 (LAFM…FVFV).

The protein belongs to the MscS (TC 1.A.23) family. As to expression, detected in the epidermis, cortex, and endodermis of the root tip.

The protein resides in the cell membrane. Its function is as follows. Mechanosensitive channel that opens in response to stretch forces in the membrane lipid bilayer. This chain is Mechanosensitive ion channel protein 9 (MSL9), found in Arabidopsis thaliana (Mouse-ear cress).